Here is a 144-residue protein sequence, read N- to C-terminus: Macromomycin (144 aa).

Residues 1–32 (MLQNTSRFLARAGATVGVAAGLAFSLPADRDG) form the signal peptide. 2 disulfides stabilise this stretch: cysteine 68–cysteine 78 and cysteine 120–cysteine 125.

The protein belongs to the neocarzinostatin family.

Functionally, binds non-covalently to a chromophore which is the cytotoxic and mutagenic component of the antibiotic. The chromophore binds to DNA as a weak intercalator and causes single- and double-strand breaks. This chain is Macromomycin, found in Streptomyces macromomyceticus.